Reading from the N-terminus, the 224-residue chain is UPF0758 protein CJA_3522 (224 aa).

The MPN domain maps to 102 to 224 (LLSSPHLVRD…LVSLAERGWL (123 aa)). 3 residues coordinate Zn(2+): H173, H175, and D186. The short motif at 173 to 186 (HNHPSGLAEPSQAD) is the JAMM motif element.

It belongs to the UPF0758 family.

This Cellvibrio japonicus (strain Ueda107) (Pseudomonas fluorescens subsp. cellulosa) protein is UPF0758 protein CJA_3522.